Here is a 504-residue protein sequence, read N- to C-terminus: Maturase K (504 aa).

The protein belongs to the intron maturase 2 family. MatK subfamily.

The protein localises to the plastid. It is found in the chloroplast. In terms of biological role, usually encoded in the trnK tRNA gene intron. Probably assists in splicing its own and other chloroplast group II introns. The protein is Maturase K of Quercus coccifera (Kermes oak).